A 441-amino-acid chain; its full sequence is Argininosuccinate lyase (441 aa).

This sequence belongs to the lyase 1 family. Argininosuccinate lyase subfamily.

Its subcellular location is the cytoplasm. It catalyses the reaction 2-(N(omega)-L-arginino)succinate = fumarate + L-arginine. Its pathway is amino-acid biosynthesis; L-arginine biosynthesis; L-arginine from L-ornithine and carbamoyl phosphate: step 3/3. This Thermoanaerobacter pseudethanolicus (strain ATCC 33223 / 39E) (Clostridium thermohydrosulfuricum) protein is Argininosuccinate lyase.